Consider the following 42-residue polypeptide: Photosystem I reaction center subunit IX (42 aa).

Residues 7–27 (YLSTAPVLATLWFGFLAGLLI) form a helical membrane-spanning segment.

It belongs to the PsaJ family.

The protein resides in the plastid. It is found in the chloroplast thylakoid membrane. Functionally, may help in the organization of the PsaE and PsaF subunits. The sequence is that of Photosystem I reaction center subunit IX from Psilotum nudum (Whisk fern).